The primary structure comprises 92 residues: PqqA binding protein (92 aa).

It belongs to the PqqD family. In terms of assembly, monomer. Interacts with PqqE.

Its pathway is cofactor biosynthesis; pyrroloquinoline quinone biosynthesis. Its function is as follows. Functions as a PqqA binding protein and presents PqqA to PqqE, in the pyrroloquinoline quinone (PQQ) biosynthetic pathway. This Xanthomonas oryzae pv. oryzae (strain PXO99A) protein is PqqA binding protein.